We begin with the raw amino-acid sequence, 247 residues long: Adenosylcobinamide-GDP ribazoletransferase (247 aa).

A run of 5 helical transmembrane segments spans residues 34–54, 59–79, 113–133, 138–158, and 194–214; these read IVMFPFIGLILGGISGLIFIL, CGIPLAALFCILALALLTGGF, GGLALIFVLLAKILVVSELAL, MLAALAAACAAGRGSAVLLMY, and VLLLGMQGLATMVVTLAAIFI.

This sequence belongs to the CobS family. It depends on Mg(2+) as a cofactor.

It is found in the cell inner membrane. The enzyme catalyses alpha-ribazole + adenosylcob(III)inamide-GDP = adenosylcob(III)alamin + GMP + H(+). It carries out the reaction alpha-ribazole 5'-phosphate + adenosylcob(III)inamide-GDP = adenosylcob(III)alamin 5'-phosphate + GMP + H(+). Its pathway is cofactor biosynthesis; adenosylcobalamin biosynthesis; adenosylcobalamin from cob(II)yrinate a,c-diamide: step 7/7. Functionally, joins adenosylcobinamide-GDP and alpha-ribazole to generate adenosylcobalamin (Ado-cobalamin). Also synthesizes adenosylcobalamin 5'-phosphate from adenosylcobinamide-GDP and alpha-ribazole 5'-phosphate. The polypeptide is Adenosylcobinamide-GDP ribazoletransferase (Salmonella typhi).